The sequence spans 685 residues: ATP-dependent zinc metalloprotease FTSH 8, chloroplastic (685 aa).

Residues 1 to 37 constitute a chloroplast transit peptide; the sequence is MAASSACLLGNGLSVYTTKQRFQKLGLDRTSKVTVVK. The transit peptide at 38-73 directs the protein to the thylakoid; sequence ASLDEKKHEGRRGFFKLLLGNAAAGVGLLASGNANA. Topologically, residues 38–161 are lumenal, thylakoid; sequence ASLDEKKHEG…HNAQEDQGSP (124 aa). Residues 162-182 traverse the membrane as a helical segment; sequence ILNLIGNLAFPVILIGGLFLL. The Stromal segment spans residues 183 to 685; sequence SRRSSGGMGG…STSTPTPASV (503 aa). An ATP-binding site is contributed by 260–267; sequence GPPGTGKT. Residue His481 participates in Zn(2+) binding. Residue Glu482 is part of the active site. Zn(2+)-binding residues include His485 and Asp559.

The protein in the N-terminal section; belongs to the AAA ATPase family. It in the C-terminal section; belongs to the peptidase M41 family. Heterohexamers with FTSH1, FTSH2 and FTSH5. May also form homooligomers. It depends on Zn(2+) as a cofactor. In terms of tissue distribution, expressed in cotyledons, cauline and rosette leaves, stems, sepals, flovers and siliques. Very low in roots.

Its subcellular location is the plastid. The protein resides in the chloroplast thylakoid membrane. Functionally, part of a complex that function as an ATP-dependent zinc metallopeptidase. Involved in the thylakoid formation and in the removal of damaged D1 in the photosystem II, preventing cell death under high-intensity light conditions. This chain is ATP-dependent zinc metalloprotease FTSH 8, chloroplastic (FTSH8), found in Arabidopsis thaliana (Mouse-ear cress).